Consider the following 47-residue polypeptide: PhoP/PhoQ regulator MgrB (47 aa).

The helical transmembrane segment at 6–26 (WVLLIVIIAGCLLLWTQMLNV) threads the bilayer.

The protein belongs to the MgrB family. As to quaternary structure, may form homooligomers. Probably interacts with the periplasmic domain of PhoQ.

It is found in the cell inner membrane. PhoP-regulated transcription is redox-sensitive, being activated when the periplasm becomes more reducing. MgrB acts between DsbA/DsbB and PhoP/PhoQ in this pathway. Represses PhoP/PhoQ signaling, possibly by binding to the periplasmic domain of PhoQ, altering its activity and that of downstream effector PhoP. This Klebsiella pneumoniae (strain 342) protein is PhoP/PhoQ regulator MgrB.